Here is a 631-residue protein sequence, read N- to C-terminus: 1-deoxy-D-xylulose-5-phosphate synthase (631 aa).

Residues His87 and 128-130 each bind thiamine diphosphate; that span reads GHS. Asp159 provides a ligand contact to Mg(2+). Thiamine diphosphate is bound by residues 160 to 161, Asn188, Phe295, and Glu378; that span reads GA. Asn188 is a Mg(2+) binding site.

This sequence belongs to the transketolase family. DXPS subfamily. As to quaternary structure, homodimer. Requires Mg(2+) as cofactor. It depends on thiamine diphosphate as a cofactor.

The enzyme catalyses D-glyceraldehyde 3-phosphate + pyruvate + H(+) = 1-deoxy-D-xylulose 5-phosphate + CO2. It participates in metabolic intermediate biosynthesis; 1-deoxy-D-xylulose 5-phosphate biosynthesis; 1-deoxy-D-xylulose 5-phosphate from D-glyceraldehyde 3-phosphate and pyruvate: step 1/1. Its function is as follows. Catalyzes the acyloin condensation reaction between C atoms 2 and 3 of pyruvate and glyceraldehyde 3-phosphate to yield 1-deoxy-D-xylulose-5-phosphate (DXP). This Pseudomonas syringae pv. tomato (strain ATCC BAA-871 / DC3000) protein is 1-deoxy-D-xylulose-5-phosphate synthase.